Consider the following 574-residue polypeptide: Pentatricopeptide repeat-containing protein At5g25630 (574 aa).

Residues 1–21 (MEDVNQEKKKVPPMSEPERST) are compositionally biased toward basic and acidic residues. A disordered region spans residues 1–25 (MEDVNQEKKKVPPMSEPERSTPIKT). PPR repeat units follow at residues 44–78 (TVRSRTKLMNVLIERGRPHEAQTVFKTLAETGHRP), 79–113 (SLISYTTLLAAMTVQKQYGSISSIVSEVEQSGTKL), 114–148 (DSIFFNAVINAFSESGNMEDAVQALLKMKELGLNP), 149–183 (TTSTYNTLIKGYGIAGKPERSSELLDLMLEEGNVD), 187–221 (NIRTFNVLVQAWCKKKKVEEAWEVVKKMEECGVRP), 222–258 (DTVTYNTIATCYVQKGETVRAESEVVEKMVMKEKAKP), 259–293 (NGRTCGIVVGGYCREGRVRDGLRFVRRMKEMRVEA), 294–328 (NLVVFNSLINGFVEVMDRDGIDEVLTLMKECNVKA), 329–363 (DVITYSTVMNAWSSAGYMEKAAQVFKEMVKAGVKP), 364–394 (DAHAYSILAKGYVRAKEPKKAEELLETLIVE), 398–432 (NVVIFTTVISGWCSNGSMDDAMRVFNKMCKFGVSP), and 433–467 (NIKTFETLMWGYLEVKQPWKAEEVLQMMRGCGVKP).

Belongs to the PPR family. P subfamily.

This is Pentatricopeptide repeat-containing protein At5g25630 from Arabidopsis thaliana (Mouse-ear cress).